The following is a 518-amino-acid chain: Cytochrome P450 3A27 (518 aa).

Cys447 lines the heme pocket.

Belongs to the cytochrome P450 family. The cofactor is heme.

The protein resides in the endoplasmic reticulum membrane. Its subcellular location is the microsome membrane. It catalyses the reaction an organic molecule + reduced [NADPH--hemoprotein reductase] + O2 = an alcohol + oxidized [NADPH--hemoprotein reductase] + H2O + H(+). Cytochromes P450 are a group of heme-thiolate monooxygenases. In liver microsomes, this enzyme is involved in an NADPH-dependent electron transport pathway. It oxidizes a variety of structurally unrelated compounds, including steroids, fatty acids, and xenobiotics. The chain is Cytochrome P450 3A27 (cyp3a27) from Oncorhynchus mykiss (Rainbow trout).